A 146-amino-acid polypeptide reads, in one-letter code: Putative ankyrin repeat protein FPV224 (146 aa).

ANK repeat units follow at residues 9–38, 42–79, 94–126, and 127–145; these read SLST…DASI, KGIT…TRDI, YVFV…RIDE, and YYYS…KAVN.

The protein is Putative ankyrin repeat protein FPV224 of Fowlpox virus (strain NVSL) (FPV).